The following is a 2214-amino-acid chain: Genome polyprotein (2214 aa).

2 disordered regions span residues 1 to 21 (MGAQ…VATG) and 600 to 619 (KPQK…VNSQ). Glycine 2 carries the N-myristoyl glycine; by host lipid modification. The Cytoplasmic segment spans residues 2–1525 (GAQVSSQKVG…NLNRAMTILQ (1524 aa)). Amphipathic alpha-helix stretches follow at residues 580 to 601 (QGIE…QPKP) and 581 to 601 (GIEE…QPKP). Residues 606–619 (TAQSTPSTSGVNSQ) show a composition bias toward polar residues. Residues histidine 906 and aspartate 924 each act as for protease 2A activity in the active site. Cysteine 941 and cysteine 943 together coordinate Zn(2+). The active-site For protease 2A activity is the cysteine 995. The Zn(2+) site is built by cysteine 1001 and histidine 1003. Positions 1133–1205 (GDSWLKKFTE…HQSCPSQEQQ (73 aa)) are membrane-binding. The tract at residues 1133–1271 (GDSWLKKFTE…SPGTGKSIAT (139 aa)) is oligomerization. Residues 1154 to 1158 (SNKIS) form an RNA-binding region. An SF3 helicase domain is found at 1237 to 1393 (ENTINNYIQF…SEHSIKGKLN (157 aa)). 1261-1268 (GSPGTGKS) lines the ATP pocket. Residues cysteine 1401, cysteine 1404, cysteine 1413, and cysteine 1418 each coordinate Zn(2+). A C4-type zinc finger spans residues 1401–1418 (CKDCPQPANFKKCCPLVC). Residues 1445 to 1452 (ERNRRANI) form an RNA-binding region. Residues 1456–1461 (MEALFQ) are oligomerization. The stretch at 1526-1541 (AVTTFAAVAAVVYVMY) is an intramembrane region. The Cytoplasmic segment spans residues 1542-2214 (KLFAGHQGAY…TLYRRWLDSF (673 aa)). An O-(5'-phospho-RNA)-tyrosine modification is found at tyrosine 1551. Residues 1571-1749 (GPGFDYAVAM…FAAALKRSYF (179 aa)) enclose the Peptidase C3 domain. Residues histidine 1610, glutamate 1641, and cysteine 1717 each act as for protease 3C activity in the active site. The 116-residue stretch at 1980–2095 (EKLFAFDYTG…SYPHEVDASL (116 aa)) folds into the RdRp catalytic domain. Aspartate 1986 and aspartate 2081 together coordinate Mg(2+).

Belongs to the picornaviruses polyprotein family. Interacts with capsid protein VP1 and capsid protein VP3 to form heterotrimeric protomers. As to quaternary structure, interacts with capsid protein VP0, and capsid protein VP3 to form heterotrimeric protomers. Five protomers subsequently associate to form pentamers which serve as building blocks for the capsid. Interacts with capsid protein VP2, capsid protein VP3 and capsid protein VP4 following cleavage of capsid protein VP0. In terms of assembly, interacts with capsid protein VP1 and capsid protein VP3 in the mature capsid. Interacts with capsid protein VP0 and capsid protein VP1 to form heterotrimeric protomers. Five protomers subsequently associate to form pentamers which serve as building blocks for the capsid. Interacts with capsid protein VP4 in the mature capsid. Interacts with protein 2C; this interaction may be important for virion morphogenesis. As to quaternary structure, interacts with capsid protein VP1 and capsid protein VP3. In terms of assembly, homodimer. Homohexamer; forms a hexameric ring structure with 6-fold symmetry characteristic of AAA+ ATPases. Interacts (via N-terminus) with host RTN3 (via reticulon domain); this interaction is important for viral replication. Interacts with capsid protein VP3; this interaction may be important for virion morphogenesis. As to quaternary structure, interacts with protein 3CD. In terms of assembly, homodimer. Interacts with host GBF1. Interacts (via GOLD domain) with host ACBD3 (via GOLD domain); this interaction allows the formation of a viral protein 3A/ACBD3 heterotetramer with a 2:2 stoichiometry, which will stimulate the recruitment of host PI4KB in order to synthesize PI4P at the viral RNA replication sites. Interacts with RNA-directed RNA polymerase. As to quaternary structure, interacts with protein 3AB and with RNA-directed RNA polymerase. In terms of assembly, interacts with Viral protein genome-linked and with protein 3CD. It depends on Mg(2+) as a cofactor. In terms of processing, specific enzymatic cleavages in vivo by the viral proteases yield processing intermediates and the mature proteins. Post-translationally, myristoylation is required for the formation of pentamers during virus assembly. Further assembly of 12 pentamers and a molecule of genomic RNA generates the provirion. During virion maturation, immature virions are rendered infectious following cleavage of VP0 into VP4 and VP2. This maturation seems to be an autocatalytic event triggered by the presence of RNA in the capsid and it is followed by a conformational change infectious virion. In terms of processing, myristoylation is required during RNA encapsidation and formation of the mature virus particle. Post-translationally, VPg is uridylylated by the polymerase into VPg-pUpU. This acts as a nucleotide-peptide primer for the genomic RNA replication.

The protein resides in the virion. Its subcellular location is the host cytoplasm. It is found in the host cytoplasmic vesicle membrane. The protein localises to the host nucleus. It catalyses the reaction a ribonucleoside 5'-triphosphate + H2O = a ribonucleoside 5'-diphosphate + phosphate + H(+). The catalysed reaction is Selective cleavage of Tyr-|-Gly bond in the picornavirus polyprotein.. The enzyme catalyses RNA(n) + a ribonucleoside 5'-triphosphate = RNA(n+1) + diphosphate. It carries out the reaction Selective cleavage of Gln-|-Gly bond in the poliovirus polyprotein. In other picornavirus reactions Glu may be substituted for Gln, and Ser or Thr for Gly.. Its activity is regulated as follows. Replication or transcription is subject to high level of random mutations by the nucleotide analog ribavirin. Its function is as follows. Forms an icosahedral capsid of pseudo T=3 symmetry with capsid proteins VP2 and VP3. The capsid is 300 Angstroms in diameter, composed of 60 copies of each capsid protein and enclosing the viral positive strand RNA genome. Capsid protein VP1 mainly forms the vertices of the capsid. Capsid protein VP1 interacts with host cell receptor to provide virion attachment to target host cells. This attachment induces virion internalization. Tyrosine kinases are probably involved in the entry process. After binding to its receptor, the capsid undergoes conformational changes. Capsid protein VP1 N-terminus (that contains an amphipathic alpha-helix) and capsid protein VP4 are externalized. Together, they shape a pore in the host membrane through which viral genome is translocated to host cell cytoplasm. Functionally, forms an icosahedral capsid of pseudo T=3 symmetry with capsid proteins VP2 and VP3. The capsid is 300 Angstroms in diameter, composed of 60 copies of each capsid protein and enclosing the viral positive strand RNA genome. In terms of biological role, lies on the inner surface of the capsid shell. After binding to the host receptor, the capsid undergoes conformational changes. Capsid protein VP4 is released, Capsid protein VP1 N-terminus is externalized, and together, they shape a pore in the host membrane through which the viral genome is translocated into the host cell cytoplasm. Component of immature procapsids, which is cleaved into capsid proteins VP4 and VP2 after maturation. Allows the capsid to remain inactive before the maturation step. Its function is as follows. Cysteine protease that cleaves viral polyprotein and specific host proteins. It is responsible for the autocatalytic cleavage between the P1 and P2 regions, which is the first cleavage occurring in the polyprotein. Also cleaves the host translation initiation factor EIF4G1, in order to shut down the capped cellular mRNA translation. Inhibits the host nucleus-cytoplasm protein and RNA trafficking by cleaving host members of the nuclear pores. Counteracts stress granule formation probably by antagonizing its assembly or promoting its dissassembly. Cleaves and inhibits host IFIH1/MDA5, thereby inhibiting the type-I IFN production and the establishment of the antiviral state. Cleaves and inhibits host MAVS, thereby inhibiting the type-I IFN production and the establishment of the antiviral state. Functionally, plays an essential role in the virus replication cycle by acting as a viroporin. Creates a pore in the host endoplasmic reticulum and as a consequence releases Ca2+ in the cytoplasm of infected cell. In turn, high levels of cytoplasmic calcium may trigger membrane trafficking and transport of viral ER-associated proteins to viroplasms, sites of viral genome replication. In terms of biological role, induces and associates with structural rearrangements of intracellular membranes. Displays RNA-binding, nucleotide binding and NTPase activities. May play a role in virion morphogenesis and viral RNA encapsidation by interacting with the capsid protein VP3. Localizes the viral replication complex to the surface of membranous vesicles. Together with protein 3CD binds the Cis-Active RNA Element (CRE) which is involved in RNA synthesis initiation. Acts as a cofactor to stimulate the activity of 3D polymerase, maybe through a nucleid acid chaperone activity. Its function is as follows. Localizes the viral replication complex to the surface of membranous vesicles. It inhibits host cell endoplasmic reticulum-to-Golgi apparatus transport and causes the disassembly of the Golgi complex, possibly through GBF1 interaction. This would result in depletion of MHC, trail receptors and IFN receptors at the host cell surface. Plays an essential role in viral RNA replication by recruiting ACBD3 and PI4KB at the viral replication sites, thereby allowing the formation of the rearranged membranous structures where viral replication takes place. Functionally, acts as a primer for viral RNA replication and remains covalently bound to viral genomic RNA. VPg is uridylylated prior to priming replication into VPg-pUpU. The oriI viral genomic sequence may act as a template for this. The VPg-pUpU is then used as primer on the genomic RNA poly(A) by the RNA-dependent RNA polymerase to replicate the viral genome. During genome replication, the VPg-RNA linkage is removed by the host TDP2, thereby accelerating replication. During the late stage of the replication cycle, host TDP2 is excluded from sites of viral RNA synthesis and encapsidation, allowing for the generation of progeny virions. In terms of biological role, involved in the viral replication complex and viral polypeptide maturation. It exhibits protease activity with a specificity and catalytic efficiency that is different from protease 3C. Protein 3CD lacks polymerase activity. Protein 3CD binds to the 5'UTR of the viral genome. Replicates the viral genomic RNA on the surface of intracellular membranes. May form linear arrays of subunits that propagate along a strong head-to-tail interaction called interface-I. Covalently attaches UMP to a tyrosine of VPg, which is used to prime RNA synthesis. The positive stranded RNA genome is first replicated at virus induced membranous vesicles, creating a dsRNA genomic replication form. This dsRNA is then used as template to synthesize positive stranded RNA genomes. ss(+)RNA genomes are either translated, replicated or encapsidated. Its function is as follows. Major viral protease that mediates proteolytic processing of the polyprotein. Cleaves host EIF5B, contributing to host translation shutoff. Also cleaves host PABPC1, contributing to host translation shutoff. Cleaves host NLRP1, triggers host N-glycine-mediated degradation of the autoinhibitory NLRP1 N-terminal fragment. The chain is Genome polyprotein from Coxsackievirus A24 (strain EH24/70).